The following is a 211-amino-acid chain: Holliday junction branch migration complex subunit RuvA (211 aa).

The interval 1–63 (MIASLRGTVI…EDSQTLYVFK (63 aa)) is domain I. The segment at 64–142 (DADEKRAFAT…DLGEIADTGA (79 aa)) is domain II. The tract at residues 143–157 (VGAAGAVGDGGDGQA) is flexible linker. The domain III stretch occupies residues 158–211 (VAPDVREQVLEALVGLGFTESKAGTTIEAVLSQWSAPQAPDASGLLRASLAAIK).

The protein belongs to the RuvA family. Homotetramer. Forms an RuvA(8)-RuvB(12)-Holliday junction (HJ) complex. HJ DNA is sandwiched between 2 RuvA tetramers; dsDNA enters through RuvA and exits via RuvB. An RuvB hexamer assembles on each DNA strand where it exits the tetramer. Each RuvB hexamer is contacted by two RuvA subunits (via domain III) on 2 adjacent RuvB subunits; this complex drives branch migration. In the full resolvosome a probable DNA-RuvA(4)-RuvB(12)-RuvC(2) complex forms which resolves the HJ.

It localises to the cytoplasm. In terms of biological role, the RuvA-RuvB-RuvC complex processes Holliday junction (HJ) DNA during genetic recombination and DNA repair, while the RuvA-RuvB complex plays an important role in the rescue of blocked DNA replication forks via replication fork reversal (RFR). RuvA specifically binds to HJ cruciform DNA, conferring on it an open structure. The RuvB hexamer acts as an ATP-dependent pump, pulling dsDNA into and through the RuvAB complex. HJ branch migration allows RuvC to scan DNA until it finds its consensus sequence, where it cleaves and resolves the cruciform DNA. In Corynebacterium jeikeium (strain K411), this protein is Holliday junction branch migration complex subunit RuvA.